The primary structure comprises 154 residues: Aspartate carbamoyltransferase regulatory chain (154 aa).

Cys-109, Cys-114, Cys-138, and Cys-141 together coordinate Zn(2+).

The protein belongs to the PyrI family. Contains catalytic and regulatory chains. Zn(2+) serves as cofactor.

Functionally, involved in allosteric regulation of aspartate carbamoyltransferase. This Sodalis glossinidius (strain morsitans) protein is Aspartate carbamoyltransferase regulatory chain.